Consider the following 222-residue polypeptide: Probable GTP-binding protein EngB (222 aa).

Residues 22 to 197 (TSAEIAFVGR…ETVVAGWFAG (176 aa)) form the EngB-type G domain. The Mg(2+) site is built by Ser37 and Thr59. The tract at residues 201–222 (RQADELTDGEPDDRTPDPDSAS) is disordered. The segment covering 212 to 222 (DDRTPDPDSAS) has biased composition (basic and acidic residues).

The protein belongs to the TRAFAC class TrmE-Era-EngA-EngB-Septin-like GTPase superfamily. EngB GTPase family. Requires Mg(2+) as cofactor.

In terms of biological role, necessary for normal cell division and for the maintenance of normal septation. The sequence is that of Probable GTP-binding protein EngB from Laribacter hongkongensis (strain HLHK9).